The sequence spans 611 residues: Sensor histidine kinase WalK (611 aa).

At 1–13 (MNKVGFFRSIQFK) the chain is on the cytoplasmic side. A helical membrane pass occupies residues 14-34 (ITLIYVLLIIIAMQIIGVYFV). The Extracellular segment spans residues 35–182 (NQVEKSLISS…VFNQMKTINT (148 aa)). The chain crosses the membrane as a helical span at residues 183–203 (ILASGTGLALVLTALLGIFLA). Residues 204–256 (RTITHPLSDMRKQAMELAKGNFSRKVKKYGHDEIGQLATTFNHLTRELEDAQA) enclose the HAMP domain. The Cytoplasmic segment spans residues 204–611 (RTITHPLSDM…EEQEDDWDEA (408 aa)). Residues 263–324 (RKLASVIAYM…QENYTFEDLV (62 aa)) enclose the PAS domain. The 55-residue stretch at 325–379 (EQQDSMLLEIERDDELTVLRVNFSVIQREHGKIDGLIAVIYDVTEQEKMDQERRE) folds into the PAC domain. The Histidine kinase domain occupies 383 to 602 (NVSHELRTPL…TITFTLPYKE (220 aa)). His386 is subject to Phosphohistidine; by autocatalysis.

Homodimer. Interacts with YycH and YycI. In terms of processing, autophosphorylated.

The protein localises to the cell membrane. It catalyses the reaction ATP + protein L-histidine = ADP + protein N-phospho-L-histidine.. In terms of biological role, member of the two-component regulatory system WalK/WalR involved in the regulation of the ftsAZ operon, the yocH and ykvT, cwlO, lytE, ydjM, yjeA, yoeB genes and the tagAB and tagDEF operons. Phosphorylates WalR. This Bacillus subtilis (strain 168) protein is Sensor histidine kinase WalK.